Here is a 309-residue protein sequence, read N- to C-terminus: Peptide methionine sulfoxide reductase MsrA/MsrB (309 aa).

The segment at 1–153 (MIYLAGGCFW…PNGYCHIDIN (153 aa)) is peptide methionine sulfoxide reductase A. Cys8 is a catalytic residue. A MsrB domain is found at 170–293 (ATEIKEKLSA…NSLSITFIPK (124 aa)). Cys282 (nucleophile) is an active-site residue.

It in the N-terminal section; belongs to the MsrA Met sulfoxide reductase family. The protein in the C-terminal section; belongs to the MsrB Met sulfoxide reductase family.

The enzyme catalyses L-methionyl-[protein] + [thioredoxin]-disulfide + H2O = L-methionyl-(S)-S-oxide-[protein] + [thioredoxin]-dithiol. It carries out the reaction [thioredoxin]-disulfide + L-methionine + H2O = L-methionine (S)-S-oxide + [thioredoxin]-dithiol. The catalysed reaction is L-methionyl-[protein] + [thioredoxin]-disulfide + H2O = L-methionyl-(R)-S-oxide-[protein] + [thioredoxin]-dithiol. Functionally, has an important function as a repair enzyme for proteins that have been inactivated by oxidation. Catalyzes the reversible oxidation-reduction of methionine sulfoxide in proteins to methionine. In Streptococcus pyogenes serotype M18 (strain MGAS8232), this protein is Peptide methionine sulfoxide reductase MsrA/MsrB (msrAB).